The sequence spans 272 residues: 2-succinyl-6-hydroxy-2,4-cyclohexadiene-1-carboxylate synthase (272 aa).

This sequence belongs to the AB hydrolase superfamily. MenH family. Monomer.

It catalyses the reaction 5-enolpyruvoyl-6-hydroxy-2-succinyl-cyclohex-3-ene-1-carboxylate = (1R,6R)-6-hydroxy-2-succinyl-cyclohexa-2,4-diene-1-carboxylate + pyruvate. Its pathway is quinol/quinone metabolism; 1,4-dihydroxy-2-naphthoate biosynthesis; 1,4-dihydroxy-2-naphthoate from chorismate: step 3/7. It participates in quinol/quinone metabolism; menaquinone biosynthesis. Functionally, catalyzes a proton abstraction reaction that results in 2,5-elimination of pyruvate from 2-succinyl-5-enolpyruvyl-6-hydroxy-3-cyclohexene-1-carboxylate (SEPHCHC) and the formation of 2-succinyl-6-hydroxy-2,4-cyclohexadiene-1-carboxylate (SHCHC). The chain is 2-succinyl-6-hydroxy-2,4-cyclohexadiene-1-carboxylate synthase from Yersinia pseudotuberculosis serotype I (strain IP32953).